The chain runs to 815 residues: Protein pygopus (815 aa).

Disordered regions lie at residues 1 to 107 and 147 to 711; these read MTHN…QVSA and GMGG…GPMG. The Nuclear localization signal motif lies at 39–45; it reads PKKRRKT. A compositionally biased stretch (low complexity) spans 46–73; sequence SSAANSAAAVAAAAAAAAAANSMQQQQA. The segment covering 74–86 has biased composition (pro residues); it reads PPTPQDLLPPPPM. Over residues 188-199 the composition is skewed to low complexity; it reads RGMSPMHPHQMG. Composition is skewed to gly residues over residues 230-248 and 257-269; these read PMGG…GMGG and GMGG…GGPN. A compositionally biased stretch (pro residues) spans 307–316; that stretch reads LGPPSGPGPG. 4 stretches are compositionally biased toward low complexity: residues 323–341, 407–424, 444–478, and 495–545; these read GPQQ…NGQM, SNNN…NQNP, PSVS…VPTS, and GPSP…HQQH. Pro residues predominate over residues 569 to 580; sequence PQQPSHLGPPHP. Gly residues predominate over residues 602–621; sequence GGPGMHGGPAGMPPHMGGGP. Low complexity predominate over residues 622–636; that stretch reads NPHMMGGPHGNAGPH. Residues 640–656 show a composition bias toward gly residues; the sequence is GHMGGVPGPGPGPGGMN. Residues 663–675 are compositionally biased toward basic residues; sequence MSPHHGHPHHHHN. Residues 678–711 show a composition bias toward gly residues; that stretch reads GGPGPNMFGGGGGGPMGPGGPMGNMGPMGGGPMG. A PHD-type zinc finger spans residues 747-805; the sequence is IYPCGMCHKEVNDNDEAVFCESGCNFFFHRTCVGLTEAAFQMLNKEVFAEWCCDKCVSS.

In terms of assembly, binds to BCL9 via the PHD-type zinc finger motif, and thereby becomes part of the nuclear ARM/PAN complex. In terms of tissue distribution, ubiquitous throughout embryogenesis and larval development.

It localises to the nucleus. In terms of biological role, involved in signal transduction through the Wnt pathway. This is Protein pygopus (pygo) from Drosophila melanogaster (Fruit fly).